Here is a 171-residue protein sequence, read N- to C-terminus: UPF0303 protein YPN_2129 (171 aa).

Belongs to the UPF0303 family.

This Yersinia pestis bv. Antiqua (strain Nepal516) protein is UPF0303 protein YPN_2129.